The following is a 44-amino-acid chain: Protein Tat (44 aa).

Residues 1–44 (APEDSQSHQVSLSKQPASQAGGDPTGPKESKKKVESETETDPVP) form a disordered region. Residues 7 to 18 (SHQVSLSKQPAS) are compositionally biased toward polar residues. Lysine 14 participates in a covalent cross-link: Glycyl lysine isopeptide (Lys-Gly) (interchain with G-Cter in ubiquitin). A Cell attachment site motif is present at residues 21-23 (GGD). Over residues 26–36 (GPKESKKKVES) the composition is skewed to basic and acidic residues.

It belongs to the lentiviruses Tat family. As to quaternary structure, interacts with host CCNT1. Associates with the P-TEFb complex composed at least of Tat, P-TEFb (CDK9 and CCNT1), TAR RNA, RNA Pol II. Recruits the HATs CREBBP, TAF1/TFIID, EP300, PCAF and GCN5L2. Interacts with host KAT5/Tip60; this interaction targets the latter to degradation. Interacts with the host deacetylase SIRT1. Interacts with host capping enzyme RNGTT; this interaction stimulates RNGTT. Binds to host KDR, and to the host integrins ITGAV/ITGB3 and ITGA5/ITGB1. Interacts with host KPNB1/importin beta-1 without previous binding to KPNA1/importin alpha-1. Interacts with EIF2AK2. Interacts with host nucleosome assembly protein NAP1L1; this interaction may be required for the transport of Tat within the nucleus, since the two proteins interact at the nuclear rim. Interacts with host C1QBP/SF2P32; this interaction involves lysine-acetylated Tat. Interacts with the host chemokine receptors CCR2, CCR3 and CXCR4. Interacts with host DPP4/CD26; this interaction may trigger an anti-proliferative effect. Interacts with host LDLR. Interacts with the host extracellular matrix metalloproteinase MMP1. Interacts with host PRMT6; this interaction mediates Tat's methylation. Interacts with, and is ubiquitinated by MDM2/Hdm2. Interacts with host PSMC3 and HTATIP2. Interacts with STAB1; this interaction may overcome SATB1-mediated repression of IL2 and IL2RA (interleukin) in T cells by binding to the same domain than HDAC1. Interacts (when acetylated) with human CDK13, thereby increasing HIV-1 mRNA splicing and promoting the production of the doubly spliced HIV-1 protein Nef. Post-translationally, acetylation by EP300, CREBBP, GCN5L2/GCN5 and PCAF regulates the transactivation activity of Tat. In terms of processing, phosphorylated by EIF2AK2 on serine and threonine residues adjacent to the basic region important for TAR RNA binding and function. Phosphorylation of Tat by EIF2AK2 is dependent on the prior activation of EIF2AK2 by dsRNA. Asymmetrical arginine methylation by host PRMT6 seems to diminish the transactivation capacity of Tat and affects the interaction with host CCNT1. Post-translationally, polyubiquitination by MDM2 does not target Tat to degradation, but activates its transactivation function and fosters interaction with CCNT1 and TAR RNA.

Its subcellular location is the host nucleus. It is found in the host nucleolus. The protein resides in the host cytoplasm. It localises to the secreted. In terms of biological role, transcriptional activator that increases RNA Pol II processivity, thereby increasing the level of full-length viral transcripts. Recognizes a hairpin structure at the 5'-LTR of the nascent viral mRNAs referred to as the transactivation responsive RNA element (TAR) and recruits the cyclin T1-CDK9 complex (P-TEFb complex) that will in turn hyperphosphorylate the RNA polymerase II to allow efficient elongation. The CDK9 component of P-TEFb and other Tat-activated kinases hyperphosphorylate the C-terminus of RNA Pol II that becomes stabilized and much more processive. Other factors such as HTATSF1/Tat-SF1, SUPT5H/SPT5, and HTATIP2 are also important for Tat's function. Besides its effect on RNA Pol II processivity, Tat induces chromatin remodeling of proviral genes by recruiting the histone acetyltransferases (HATs) CREBBP, EP300 and PCAF to the chromatin. This also contributes to the increase in proviral transcription rate, especially when the provirus integrates in transcriptionally silent region of the host genome. To ensure maximal activation of the LTR, Tat mediates nuclear translocation of NF-kappa-B by interacting with host RELA. Through its interaction with host TBP, Tat may also modulate transcription initiation. Tat can reactivate a latently infected cell by penetrating in it and transactivating its LTR promoter. In the cytoplasm, Tat is thought to act as a translational activator of HIV-1 mRNAs. Extracellular circulating Tat can be endocytosed by surrounding uninfected cells via the binding to several surface receptors such as CD26, CXCR4, heparan sulfate proteoglycans (HSPG) or LDLR. Neurons are rarely infected, but they internalize Tat via their LDLR. Endosomal low pH allows Tat to cross the endosome membrane to enter the cytosol and eventually further translocate into the nucleus, thereby inducing severe cell dysfunctions ranging from cell activation to cell death. Through its interaction with nuclear HATs, Tat is potentially able to control the acetylation-dependent cellular gene expression. Tat seems to inhibit the HAT activity of KAT5/Tip60 and TAF1, and consequently modify the expression of specific cellular genes. Modulates the expression of many cellular genes involved in cell survival, proliferation or in coding for cytokines (such as IL10) or cytokine receptors. May be involved in the derepression of host interleukin IL2 expression. Mediates the activation of cyclin-dependent kinases and dysregulation of microtubule network. Tat plays a role in T-cell and neurons apoptosis. Tat induced neurotoxicity and apoptosis probably contribute to neuroAIDS. Host extracellular matrix metalloproteinase MMP1 cleaves Tat and decreases Tat's mediated neurotoxicity. Circulating Tat also acts as a chemokine-like and/or growth factor-like molecule that binds to specific receptors on the surface of the cells, affecting many cellular pathways. In the vascular system, Tat binds to ITGAV/ITGB3 and ITGA5/ITGB1 integrins dimers at the surface of endothelial cells and competes with bFGF for heparin-binding sites, leading to an excess of soluble bFGF. Binds to KDR/VEGFR-2. All these Tat-mediated effects enhance angiogenesis in Kaposi's sarcoma lesions. The polypeptide is Protein Tat (Human immunodeficiency virus type 1 group M subtype B (isolate BRVA) (HIV-1)).